Here is a 290-residue protein sequence, read N- to C-terminus: Pyridoxal kinase PdxY (290 aa).

Substrate contacts are provided by residues serine 12 and 47 to 48 (TQ). Residues aspartate 114, glutamate 151, lysine 184, and 211–214 (RPLL) contribute to the ATP site. Aspartate 225 contacts substrate.

It belongs to the pyridoxine kinase family. PdxY subfamily. As to quaternary structure, homodimer. Mg(2+) serves as cofactor.

The catalysed reaction is pyridoxal + ATP = pyridoxal 5'-phosphate + ADP + H(+). The protein operates within cofactor metabolism; pyridoxal 5'-phosphate salvage; pyridoxal 5'-phosphate from pyridoxal: step 1/1. Pyridoxal kinase involved in the salvage pathway of pyridoxal 5'-phosphate (PLP). Catalyzes the phosphorylation of pyridoxal to PLP. This chain is Pyridoxal kinase PdxY, found in Pseudomonas putida (strain ATCC 700007 / DSM 6899 / JCM 31910 / BCRC 17059 / LMG 24140 / F1).